The sequence spans 120 residues: NAD(P)H-quinone oxidoreductase subunit 3 (120 aa).

A run of 3 helical transmembrane segments spans residues 6–26 (GYDAFLGFLLISAAVPALALV), 64–84 (MFALVFVIFDVETVFLYPWAV), and 89–109 (LGLLAFIEALIFISILIVALA).

It belongs to the complex I subunit 3 family. In terms of assembly, NDH-1 can be composed of about 15 different subunits; different subcomplexes with different compositions have been identified which probably have different functions.

The protein localises to the cellular thylakoid membrane. It carries out the reaction a plastoquinone + NADH + (n+1) H(+)(in) = a plastoquinol + NAD(+) + n H(+)(out). The catalysed reaction is a plastoquinone + NADPH + (n+1) H(+)(in) = a plastoquinol + NADP(+) + n H(+)(out). Its function is as follows. NDH-1 shuttles electrons from an unknown electron donor, via FMN and iron-sulfur (Fe-S) centers, to quinones in the respiratory and/or the photosynthetic chain. The immediate electron acceptor for the enzyme in this species is believed to be plastoquinone. Couples the redox reaction to proton translocation, and thus conserves the redox energy in a proton gradient. Cyanobacterial NDH-1 also plays a role in inorganic carbon-concentration. This Prochlorococcus marinus (strain SARG / CCMP1375 / SS120) protein is NAD(P)H-quinone oxidoreductase subunit 3.